Here is a 665-residue protein sequence, read N- to C-terminus: MKHNRQMPDESLENIKVLLNPKLGKPVKSLTSAQSKACYHTLISNKNLNKTSDEYEKLLANYILLCDEKYLCKTVIPDSRFWAILCDNCQKLRSETLVANLIRIFNVALKCQDSNKNEVIVSICHISRENSQLIGILLQLLSQRPIHIPLFTDTILCITLFLKCSLTLCETSLSHAVEFVPRILILLFQYNFPASMSELLYIEDLQPLILEEFVPLKQRLINFLSSVSIDDYSCSLKADLLTAIKDNSVFQKGLEMEMGDLPSINLLNAYDTFTFLNSPNGSFKRLYTEQLLFGENDFPLYEAIFKLSDQFRRLFNLSGKKENQYSDSERDLKLQIATAVLNRQTCFYKTLELFLRFWIESLAKSQSDLVSLLNLAIITLKYVCLSSSDLEAAIQTKSLLKTQVVALDSMRYKFARTLQLDSIKKEQYRTWSSSIASFDTMLSGQVRDYVRHQRLLQLQKGTWVYAENPLNPEAGTPKVYFLIVSDNHANLLAREFETQTNDLPYLFDNKILTSPGSEALANGRTKVVVLKHITSFKSIELTTPSRRTSSNVYIKLDEANVYTGVELKDRNDRTVLKFYLDTEEGRYIWLDGLKLISPFQHEDISEDTKEQIDTLFDLRKNVQMINLNVRQDIIVPPPEPSDEDEDEEFYNLETLKKVTQNFYFD.

Forms an active heterodimer with DCK1.

The protein resides in the cytoplasm. It is found in the mitochondrion. Forms a transiant heterodimeric complex with DCK1, that acts as a guanine nucleotide exchange factor (GEF) for the small GTPase RHO5. DCK1, LMO1 and RHO5 relocate to mitochondria upon oxidative stress and trigger cell death. The DCK1/LMO1/RHO5 signaling module mediates mitochondrial turnover under nitrogen starvation conditions via mitophagy. The DCK1/LMO1/RHO5 signaling module also plays a role in cell wall integrity signaling. This Saccharomyces cerevisiae (strain ATCC 204508 / S288c) (Baker's yeast) protein is ELMO family protein LMO1.